The chain runs to 639 residues: MTTSTAAKRTKSGCWTCRLRRKKCNEGGPPCDNCEARGIHCHGYGPRPQWKDRGALEREEARKLQYQSGRGRSYSRSSSTAAAAAPKPAEGAMVTGGSSSSSRGSGSSIYVGGNGLGGAQEEQHGDNNAPFSAGTGNFEYQANPAPGMSPLMSDINLALDAHAMDPLDFNIDFSSTPSSAVDKSSSTSADSPSFTSIECSQFPIFSPELPVDTPVALFPQVAPIPPGLPGRESVPVAACTDLVISHGLLLAEMDRPVGQRHGQVMAEGEKGIELMMRCPPAPRAPRLEGQGRSAHILLFVRDWYAASSWRIWSGNIQDCQNHIDAAASLLLEHETALVGEAHRLSNMERKALAFFTVRLIWNDVLLSSTRRTVPKAEMVYRRLLLADSNSRGGDSHTTTSTTGPTTTTPLLAASTFWDLTGCEGAVLLAMLDASILSAWRLGEEASGSLSIRALVGRADKIEAVVEGEIARLSSLLPRSPEKTSSASGKPSHGRKTGPENEVTVATVHSLIFAHAILTDLHQTVSGPRASVPEIGDSISRAISSAWNLWQEQQQQGAGLGLERILAWPYCVAASLAKGDQREVFREIIARTENGDGSSSGGDVQQLKSIVEQCWATSSSNHRDWKDVVQRSNQFGVFLI.

The segment at residues 14-41 is a DNA-binding region (zn(2)-C6 fungal-type); sequence CWTCRLRRKKCNEGGPPCDNCEARGIHC. Disordered stretches follow at residues 58–136 and 476–499; these read REEA…AGTG and LPRSPEKTSSASGKPSHGRKTGPE. Low complexity predominate over residues 68 to 108; sequence SGRGRSYSRSSSTAAAAAPKPAEGAMVTGGSSSSSRGSGSS.

It is found in the nucleus. Its function is as follows. Transcription factor; part of the gene cluster that mediates the biosynthesis of the phomopsins, a group of hexapeptide mycotoxins which infects lupins and causes lupinosis disease in livestock. May play a role in the regulation of the production of phomopsins. This Diaporthe leptostromiformis (Lupinosis disease fungus) protein is Transcription factor phomR'.